Reading from the N-terminus, the 396-residue chain is Alanine racemase (396 aa).

K46 (proton acceptor; specific for D-alanine) is an active-site residue. The residue at position 46 (K46) is an N6-(pyridoxal phosphate)lysine. Residue R145 participates in substrate binding. The Proton acceptor; specific for L-alanine role is filled by Y280. Residue M328 coordinates substrate.

This sequence belongs to the alanine racemase family. Requires pyridoxal 5'-phosphate as cofactor.

The catalysed reaction is L-alanine = D-alanine. It participates in amino-acid biosynthesis; D-alanine biosynthesis; D-alanine from L-alanine: step 1/1. Functionally, catalyzes the interconversion of L-alanine and D-alanine. May also act on other amino acids. This Brucella ovis (strain ATCC 25840 / 63/290 / NCTC 10512) protein is Alanine racemase (alr).